The chain runs to 393 residues: Protein TsgA (393 aa).

Over 1–10 the chain is Cytoplasmic; sequence MTNSNRIKLT. The chain crosses the membrane as a helical span at residues 11–31; that stretch reads WISFLSYALTGALVIVTGMVM. Over 32–50 the chain is Periplasmic; it reads GNIADYFHLPVSSMSNTFT. A helical membrane pass occupies residues 51 to 71; that stretch reads FLNAGILISIFLNAWLMEIIP. The Cytoplasmic segment spans residues 72–77; it reads LKTQLR. The chain crosses the membrane as a helical span at residues 78–98; that stretch reads FGFILMVLAVAGLMFGHSLAL. At 99-100 the chain is on the periplasmic side; that stretch reads FS. The helical transmembrane segment at 101–121 threads the bilayer; that stretch reads AAMFVLGLVSGITMSIGTFLI. Residues 122-133 are Cytoplasmic-facing; the sequence is TQLYEGRQRGSR. Residues 134–154 traverse the membrane as a helical segment; the sequence is LLFTDSFFSMAGMIFPMVAAF. Residues 155–161 are Periplasmic-facing; that stretch reads LLARSIE. A helical membrane pass occupies residues 162-182; the sequence is WYWVYACIGLVYLAIFILTFG. At 183 to 205 the chain is on the cytoplasmic side; it reads CEFPALGKHAQHSQAPVVKEKWG. A helical membrane pass occupies residues 206–226; sequence IGVLFLAVAALCYILGQLGFI. Residues 227–244 are Periplasmic-facing; the sequence is SWVPEYAKGLGMSLNDAG. Residues 245 to 265 form a helical membrane-spanning segment; that stretch reads ALVSDFWMSYMFGMWAFSFIL. Topologically, residues 266–272 are cytoplasmic; that stretch reads RFFDLQR. A helical transmembrane segment spans residues 273–293; it reads ILTVLAGMAAVLMYLFITGTQ. At 294–297 the chain is on the periplasmic side; that stretch reads AHMP. The chain crosses the membrane as a helical span at residues 298-318; the sequence is WFILTLGFFSSAIYTSIITLG. Residues 319 to 331 are Cytoplasmic-facing; it reads SQQTKVASPKLVN. The chain crosses the membrane as a helical span at residues 332-352; that stretch reads FILTCGTIGTMLTFVVTGPIV. The Periplasmic portion of the chain corresponds to 353-360; the sequence is AHSGPQAA. The helical transmembrane segment at 361 to 381 threads the bilayer; the sequence is LLTANGLYAVVFVMCFALGFV. The Cytoplasmic segment spans residues 382–393; that stretch reads SRHRQHSAPATH.

It belongs to the major facilitator superfamily. TsgA family.

The protein resides in the cell inner membrane. The chain is Protein TsgA from Salmonella choleraesuis (strain SC-B67).